The following is a 244-amino-acid chain: Isoprenyl transferase (244 aa).

D20 is a catalytic residue. Residue D20 coordinates Mg(2+). Residues 21 to 24, W25, R33, H37, and 65 to 67 contribute to the substrate site; these read GNGR and SSE. Catalysis depends on N68, which acts as the Proton acceptor. Residues W69, R71, R188, and 194–196 each bind substrate; that span reads RIS. Mg(2+) is bound at residue E207.

Belongs to the UPP synthase family. As to quaternary structure, homodimer. It depends on Mg(2+) as a cofactor.

Catalyzes the condensation of isopentenyl diphosphate (IPP) with allylic pyrophosphates generating different type of terpenoids. The chain is Isoprenyl transferase from Rhodopirellula baltica (strain DSM 10527 / NCIMB 13988 / SH1).